The primary structure comprises 60 residues: Lantibiotic Pep5 (60 aa).

The propeptide occupies 1–26; it reads MKNNKNLFDLEIKKETSQNTDELEPQ. The segment at 1 to 29 is disordered; it reads MKNNKNLFDLEIKKETSQNTDELEPQTAG. A 2-oxobutanoic acid modification is found at Thr-27. The lanthionine (Ser-Cys) cross-link spans 35–39; sequence SVKQC. Thr-42 and Thr-46 each carry 2,3-didehydrobutyrine. The beta-methyllanthionine (Thr-Cys) cross-link spans 50–53; that stretch reads TVSC. Residues 52–59 constitute a cross-link (lanthionine (Ser-Cys)); sequence SCKGKNGC.

This sequence belongs to the type A lantibiotic family. In terms of processing, maturation of lantibiotics involves the enzymatic conversion of Thr, and Ser into dehydrated AA and the formation of thioether bonds with cysteine. This is followed by membrane translocation and cleavage of the modified precursor. After proteolysis of the propeptide, the N-terminal 2,3-didehydrobutyrine hydrolyzes to 2-oxobutanoic acid, possibly spontaneously.

Functionally, lanthionine-containing peptide antibiotic (lantibiotic) active on Gram-positive bacteria. The bactericidal activity of lantibiotics is based on depolarization of energized bacterial cytoplasmic membranes, initiated by the formation of aqueous transmembrane pores. The polypeptide is Lantibiotic Pep5 (pepA) (Staphylococcus epidermidis).